Consider the following 182-residue polypeptide: Large ribosomal subunit protein bL25 (182 aa).

The protein belongs to the bacterial ribosomal protein bL25 family. CTC subfamily. In terms of assembly, part of the 50S ribosomal subunit; part of the 5S rRNA/L5/L18/L25 subcomplex. Contacts the 5S rRNA. Binds to the 5S rRNA independently of L5 and L18.

Its function is as follows. This is one of the proteins that binds to the 5S RNA in the ribosome where it forms part of the central protuberance. The sequence is that of Large ribosomal subunit protein bL25 from Borreliella burgdorferi (strain ATCC 35210 / DSM 4680 / CIP 102532 / B31) (Borrelia burgdorferi).